Consider the following 250-residue polypeptide: MSKSTTVLITGANKGIGLGMAKAYLSRPNHIVICSVRSAKTDVTDLEAASKASGSKLLLVYIESTSKTDPAKAVEDVQAAGVDHLDVLIANAGGMPEGNKPLLELGPDELCWSVQVNAAAPLLVLQAFKPLLQKADAPRFAVISSTSGSIEHMKNIHSFIFPGYGAAKATLNWLTMGVHLSQEWLTTLVIHPGLVQSEPGNWVAKQIGMAEAPTTIEQAAEGVIKALTNATRESVGGKFLSTSDGTVLPW.

Residues Ile-16, Ser-35, Glu-63, and Asn-91 each coordinate NADP(+). Residues Ser-145 and Tyr-164 each act as proton donor in the active site. Residues Tyr-164, Lys-168, Val-195, and Ser-197 each coordinate NADP(+). The Lowers pKa of active site Tyr role is filled by Lys-168.

The protein belongs to the short-chain dehydrogenases/reductases (SDR) family.

The protein operates within polyketide biosynthesis. Short-chain dehydrogenase; part of the gene cluster that mediates the biosynthesis of pyriculol and pyriculariol, two heptaketides that induce lesion formation upon application on rice leaves but are dispensable for pathogenicity. The highly reducing polyketide synthase synthesizes the heptaketide backbone of pyriculol and pyriculariol. Pyriculol and pyriculariol contain several hydroxyl moieties and double bonds, so it can be assumed that several reduction steps occur during biosynthesis. These reactions could be executed by PKS19 itself or partly by the tailoring enzymes OXR1, OXR2, RED1, RED2 or RED3, identified within the cluster. The FAD-linked oxidoreductase OXR1 is the only tailoring enzyme for which the function has been determined yet, and is involved in the oxidation of dihydropyriculol and dihydropyriculariol into pyriculol and pyriculariol, respectively. The chain is Short-chain dehydrogenase RED3 from Pyricularia oryzae (strain 70-15 / ATCC MYA-4617 / FGSC 8958) (Rice blast fungus).